Reading from the N-terminus, the 485-residue chain is Glutamate--tRNA ligase 2 (485 aa).

Positions 10 to 20 (PSPTGPIHIGN) match the 'HIGH' region motif. The 'KMSKS' region signature appears at 252-256 (KLSKR). ATP is bound at residue Lys255.

It belongs to the class-I aminoacyl-tRNA synthetase family. Glutamate--tRNA ligase type 1 subfamily. Monomer.

The protein localises to the cytoplasm. It catalyses the reaction tRNA(Glu) + L-glutamate + ATP = L-glutamyl-tRNA(Glu) + AMP + diphosphate. Catalyzes the attachment of glutamate to tRNA(Glu) in a two-step reaction: glutamate is first activated by ATP to form Glu-AMP and then transferred to the acceptor end of tRNA(Glu). The sequence is that of Glutamate--tRNA ligase 2 from Caldanaerobacter subterraneus subsp. tengcongensis (strain DSM 15242 / JCM 11007 / NBRC 100824 / MB4) (Thermoanaerobacter tengcongensis).